The primary structure comprises 427 residues: BSD domain-containing protein 1 (427 aa).

Residues Ser-92 and Ser-166 each carry the phosphoserine modification. Positions 146–198 (WLSEFCLEEKKGEISELLVGSPSIRALYTKMVPAAVSHSEFWHRYFYKVHQLE) constitute a BSD domain. The interval 208–397 (KQRADQSISE…ISEDWEKDFD (190 aa)) is disordered. Residues 219-229 (PGWEEEEEELE) are compositionally biased toward acidic residues. Over residues 236–245 (KEAKIPKETK) the composition is skewed to basic and acidic residues. Residues 268–279 (PAEATPSESSES) show a composition bias toward low complexity. The segment covering 324 to 333 (GPPPPPPSKP) has biased composition (pro residues). The span at 347 to 364 (PPARVETLREEVPTDLRV) shows a compositional bias: basic and acidic residues. Thr-353 carries the post-translational modification Phosphothreonine. Residues 368 to 387 (NSDSGKSTPSNNGKKGSSTD) are compositionally biased toward polar residues. Ser-384 and Ser-385 each carry phosphoserine. The span at 388 to 397 (ISEDWEKDFD) shows a compositional bias: acidic residues. Ser-415 carries the phosphoserine modification.

The polypeptide is BSD domain-containing protein 1 (Bsdc1) (Mus musculus (Mouse)).